Consider the following 189-residue polypeptide: Peptidyl-tRNA hydrolase (189 aa).

Residue tyrosine 15 participates in tRNA binding. The active-site Proton acceptor is histidine 20. TRNA is bound by residues phenylalanine 66, asparagine 68, and asparagine 114.

This sequence belongs to the PTH family. Monomer.

The protein localises to the cytoplasm. It catalyses the reaction an N-acyl-L-alpha-aminoacyl-tRNA + H2O = an N-acyl-L-amino acid + a tRNA + H(+). Hydrolyzes ribosome-free peptidyl-tRNAs (with 1 or more amino acids incorporated), which drop off the ribosome during protein synthesis, or as a result of ribosome stalling. Its function is as follows. Catalyzes the release of premature peptidyl moieties from peptidyl-tRNA molecules trapped in stalled 50S ribosomal subunits, and thus maintains levels of free tRNAs and 50S ribosomes. The chain is Peptidyl-tRNA hydrolase from Streptococcus sanguinis (strain SK36).